The following is a 299-amino-acid chain: GTPase Era (299 aa).

The 168-residue stretch at 4-171 (KSGFVAILGR…IKLLTDNLEE (168 aa)) folds into the Era-type G domain. The interval 12 to 19 (GRPNVGKS) is G1. 12 to 19 (GRPNVGKS) is a GTP binding site. The G2 stretch occupies residues 38-42 (QTTRN). The tract at residues 59-62 (DTPG) is G3. GTP-binding positions include 59–63 (DTPGI) and 121–124 (NKID). The segment at 121 to 124 (NKID) is G4. A G5 region spans residues 150–152 (ISA). In terms of domain architecture, KH type-2 spans 202-280 (TQQEVPHSVA…YLETWVKVKK (79 aa)).

It belongs to the TRAFAC class TrmE-Era-EngA-EngB-Septin-like GTPase superfamily. Era GTPase family. In terms of assembly, monomer.

The protein resides in the cytoplasm. It is found in the cell membrane. In terms of biological role, an essential GTPase that binds both GDP and GTP, with rapid nucleotide exchange. Plays a role in 16S rRNA processing and 30S ribosomal subunit biogenesis and possibly also in cell cycle regulation and energy metabolism. This chain is GTPase Era, found in Streptococcus agalactiae serotype III (strain NEM316).